A 461-amino-acid chain; its full sequence is Argininosuccinate lyase (461 aa).

Belongs to the lyase 1 family. Argininosuccinate lyase subfamily.

The protein localises to the cytoplasm. It catalyses the reaction 2-(N(omega)-L-arginino)succinate = fumarate + L-arginine. It functions in the pathway amino-acid biosynthesis; L-arginine biosynthesis; L-arginine from L-ornithine and carbamoyl phosphate: step 3/3. The sequence is that of Argininosuccinate lyase from Bacillus subtilis (strain 168).